The following is a 339-amino-acid chain: 5-dehydro-2-deoxygluconokinase (339 aa).

Belongs to the carbohydrate kinase PfkB family.

The catalysed reaction is 5-dehydro-2-deoxy-D-gluconate + ATP = 6-phospho-5-dehydro-2-deoxy-D-gluconate + ADP + H(+). It functions in the pathway polyol metabolism; myo-inositol degradation into acetyl-CoA; acetyl-CoA from myo-inositol: step 5/7. In terms of biological role, catalyzes the phosphorylation of 5-dehydro-2-deoxy-D-gluconate (2-deoxy-5-keto-D-gluconate or DKG) to 6-phospho-5-dehydro-2-deoxy-D-gluconate (DKGP). The chain is 5-dehydro-2-deoxygluconokinase from Clostridium beijerinckii (strain ATCC 51743 / NCIMB 8052) (Clostridium acetobutylicum).